Consider the following 209-residue polypeptide: Large ribosomal subunit protein uL3 (209 aa).

The segment at His-126–Pro-148 is disordered.

This sequence belongs to the universal ribosomal protein uL3 family. As to quaternary structure, part of the 50S ribosomal subunit. Forms a cluster with proteins L14 and L19.

In terms of biological role, one of the primary rRNA binding proteins, it binds directly near the 3'-end of the 23S rRNA, where it nucleates assembly of the 50S subunit. The protein is Large ribosomal subunit protein uL3 of Listeria monocytogenes serotype 4b (strain CLIP80459).